Reading from the N-terminus, the 91-residue chain is Putative regulatory protein Cphy_2880 (91 aa).

This sequence belongs to the RemA family.

The chain is Putative regulatory protein Cphy_2880 from Lachnoclostridium phytofermentans (strain ATCC 700394 / DSM 18823 / ISDg) (Clostridium phytofermentans).